The chain runs to 541 residues: Pseudokinase FAM20A (541 aa).

Positions 1–33 (MPGLRRDRLLALLLLGALFSADLYFHLWPQVQR) are cleaved as a signal peptide. 3 N-linked (GlcNAc...) asparagine glycosylation sites follow: Asn-70, Asn-145, and Asn-287. 4 cysteine pairs are disulfide-bonded: Cys-314-Cys-330, Cys-319-Cys-323, Cys-378-Cys-452, and Cys-453-Cys-512. Asn-388 carries an N-linked (GlcNAc...) asparagine glycan. N-linked (GlcNAc...) asparagine glycosylation occurs at Asn-538.

This sequence belongs to the FAM20 family. In terms of assembly, interacts with FAM20C; probably forming a heterotetramer of 2 subunits of FAM20A and 2 subunits of FAM20C. In terms of processing, N-glycosylated. In the mammary gland, expressed at higher levels in lactating mice than in virgin mice. Observed throughout the tissues of the mandibular incisor, including the secretory and maturation stage ameloblasts, the suprabasal layers of the gingival epithelium and the odontoblasts. Weak expression in the enamel matrix.

Its subcellular location is the secreted. It is found in the golgi apparatus. It localises to the endoplasmic reticulum. Pseudokinase that acts as an allosteric activator of the Golgi serine/threonine protein kinase FAM20C and is involved in biomineralization of teeth. Forms a complex with FAM20C and increases the ability of FAM20C to phosphorylate the proteins that form the 'matrix' that guides the deposition of the enamel minerals. This Mus musculus (Mouse) protein is Pseudokinase FAM20A.